Consider the following 701-residue polypeptide: Elongation factor G (701 aa).

The region spanning 11 to 287 is the tr-type G domain; it reads TKVRNIGIMA…AVIDYLPSPL (277 aa). GTP-binding positions include 20 to 27, 84 to 88, and 138 to 141; these read AHIDAGKT, DTPGH, and NKMD.

It belongs to the TRAFAC class translation factor GTPase superfamily. Classic translation factor GTPase family. EF-G/EF-2 subfamily.

It is found in the cytoplasm. Functionally, catalyzes the GTP-dependent ribosomal translocation step during translation elongation. During this step, the ribosome changes from the pre-translocational (PRE) to the post-translocational (POST) state as the newly formed A-site-bound peptidyl-tRNA and P-site-bound deacylated tRNA move to the P and E sites, respectively. Catalyzes the coordinated movement of the two tRNA molecules, the mRNA and conformational changes in the ribosome. This chain is Elongation factor G, found in Mycobacterium marinum (strain ATCC BAA-535 / M).